Reading from the N-terminus, the 102-residue chain is Putative sortase YwpE (102 aa).

The active-site Proton donor/acceptor is the histidine 17. Residue cysteine 78 is the Acyl-thioester intermediate of the active site.

The protein belongs to the bacterial sortase family.

Seems not to play a major role if any as a sortase. The protein is Putative sortase YwpE (ywpE) of Bacillus subtilis (strain 168).